The primary structure comprises 90 residues: MTRTVKCRKYNEELPGLDRPPYPGAKGQDIFEHISQKAWKEWQDHQTMLINEKRLNMMNAEDRKFIQAEMDKFFAGEDYAQAEGYVPPSN.

This sequence belongs to the Fe(2+)-trafficking protein family.

Functionally, could be a mediator in iron transactions between iron acquisition and iron-requiring processes, such as synthesis and/or repair of Fe-S clusters in biosynthetic enzymes. The polypeptide is Probable Fe(2+)-trafficking protein (Pseudomonas entomophila (strain L48)).